Consider the following 366-residue polypeptide: Anthranilate phosphoribosyltransferase (366 aa).

5-phospho-alpha-D-ribose 1-diphosphate is bound by residues Gly-79, 82–83 (GD), Thr-87, 89–92 (NIST), 107–115 (KHGNRAATS), and Ser-119. Gly-79 contributes to the anthranilate binding site. Ser-91 serves as a coordination point for Mg(2+). Anthranilate is bound at residue Asn-110. Anthranilate is bound at residue Arg-165. Positions 223 and 224 each coordinate Mg(2+). A disordered region spans residues 342–366 (ESLSGKSMSMRSRTSILSPASGERV). The span at 345–359 (SGKSMSMRSRTSILS) shows a compositional bias: polar residues.

Belongs to the anthranilate phosphoribosyltransferase family. As to quaternary structure, homodimer. The cofactor is Mg(2+).

It catalyses the reaction N-(5-phospho-beta-D-ribosyl)anthranilate + diphosphate = 5-phospho-alpha-D-ribose 1-diphosphate + anthranilate. The protein operates within amino-acid biosynthesis; L-tryptophan biosynthesis; L-tryptophan from chorismate: step 2/5. Its function is as follows. Catalyzes the transfer of the phosphoribosyl group of 5-phosphorylribose-1-pyrophosphate (PRPP) to anthranilate to yield N-(5'-phosphoribosyl)-anthranilate (PRA). This Methanosarcina barkeri (strain Fusaro / DSM 804) protein is Anthranilate phosphoribosyltransferase.